The following is a 324-amino-acid chain: NADH-ubiquinone oxidoreductase chain 1 (324 aa).

8 consecutive transmembrane segments (helical) span residues 9–29 (LTMA…LTLV), 75–95 (ILFI…WIPL), 106–126 (LGLL…LWSG), 142–162 (VAQT…VIML), 177–197 (PLYL…STLA), 228–248 (LFFL…AILF), 259–279 (ELFP…FLWV), and 300–320 (LPLT…YAGI).

The protein belongs to the complex I subunit 1 family.

The protein resides in the mitochondrion inner membrane. The catalysed reaction is a ubiquinone + NADH + 5 H(+)(in) = a ubiquinol + NAD(+) + 4 H(+)(out). Functionally, core subunit of the mitochondrial membrane respiratory chain NADH dehydrogenase (Complex I) that is believed to belong to the minimal assembly required for catalysis. Complex I functions in the transfer of electrons from NADH to the respiratory chain. The immediate electron acceptor for the enzyme is believed to be ubiquinone. This chain is NADH-ubiquinone oxidoreductase chain 1 (MT-ND1), found in Struthio camelus (Common ostrich).